The primary structure comprises 514 residues: piRNA biogenesis protein EXD1 (514 aa).

Residues Leu30–Ala122 enclose the 3'-5' exonuclease domain. The interval Ser384–Gln422 is disordered.

Belongs to the EXD1 family. In terms of assembly, homodimer. Component of the PET complex, at least composed of EXD1, PIWIL2, TDRD12 and piRNAs.

The protein localises to the cytoplasm. Functionally, RNA-binding component of the PET complex, a multiprotein complex required for the processing of piRNAs during spermatogenesis. The piRNA metabolic process mediates the repression of transposable elements during meiosis by forming complexes composed of piRNAs and Piwi proteins and governs the methylation and subsequent repression of transposable elements, preventing their mobilization, which is essential for the germline integrity. The PET complex is required during the secondary piRNAs metabolic process for the PIWIL2 slicing-triggered loading of PIWIL4 piRNAs. In the PET complex, EXD1 probably acts as an RNA adapter. EXD1 is an inactive exonuclease. The protein is piRNA biogenesis protein EXD1 (EXD1) of Homo sapiens (Human).